Reading from the N-terminus, the 402-residue chain is NADH-quinone oxidoreductase subunit D (402 aa).

This sequence belongs to the complex I 49 kDa subunit family. As to quaternary structure, NDH-1 is composed of 14 different subunits. Subunits NuoB, C, D, E, F, and G constitute the peripheral sector of the complex.

It is found in the cell inner membrane. It catalyses the reaction a quinone + NADH + 5 H(+)(in) = a quinol + NAD(+) + 4 H(+)(out). Functionally, NDH-1 shuttles electrons from NADH, via FMN and iron-sulfur (Fe-S) centers, to quinones in the respiratory chain. The immediate electron acceptor for the enzyme in this species is believed to be ubiquinone. Couples the redox reaction to proton translocation (for every two electrons transferred, four hydrogen ions are translocated across the cytoplasmic membrane), and thus conserves the redox energy in a proton gradient. The sequence is that of NADH-quinone oxidoreductase subunit D from Azorhizobium caulinodans (strain ATCC 43989 / DSM 5975 / JCM 20966 / LMG 6465 / NBRC 14845 / NCIMB 13405 / ORS 571).